The sequence spans 431 residues: Adenylosuccinate synthetase (431 aa).

Residues 12 to 18 (GDEGKGK) and 40 to 42 (GHT) each bind GTP. Residue aspartate 13 is the Proton acceptor of the active site. Mg(2+)-binding residues include aspartate 13 and glycine 40. IMP-binding positions include 13–16 (DEGK), 38–41 (NAGH), threonine 128, arginine 142, glutamine 223, threonine 238, and arginine 301. Histidine 41 (proton donor) is an active-site residue. 297–303 (TVTGRPR) serves as a coordination point for substrate. Residues arginine 303, 329–331 (SID), and 411–413 (SVG) contribute to the GTP site.

This sequence belongs to the adenylosuccinate synthetase family. Homodimer. The cofactor is Mg(2+).

It is found in the cytoplasm. The enzyme catalyses IMP + L-aspartate + GTP = N(6)-(1,2-dicarboxyethyl)-AMP + GDP + phosphate + 2 H(+). Its pathway is purine metabolism; AMP biosynthesis via de novo pathway; AMP from IMP: step 1/2. Plays an important role in the de novo pathway of purine nucleotide biosynthesis. Catalyzes the first committed step in the biosynthesis of AMP from IMP. This is Adenylosuccinate synthetase from Lacticaseibacillus casei (strain BL23) (Lactobacillus casei).